Here is a 484-residue protein sequence, read N- to C-terminus: Suppressor of fused homolog (484 aa).

The segment at Met-1 to Pro-24 is disordered. Pro residues predominate over residues Pro-12–Pro-23. Lys-257 participates in a covalent cross-link: Glycyl lysine isopeptide (Lys-Gly) (interchain with G-Cter in ubiquitin). Positions Ser-279 to Leu-360 are disordered. At Ser-301 the chain carries Phosphoserine. An N6-acetyllysine modification is found at Lys-303. Residue Lys-321 forms a Glycyl lysine isopeptide (Lys-Gly) (interchain with G-Cter in SUMO2) linkage. The span at Ala-336 to Leu-347 shows a compositional bias: basic and acidic residues. Residues Ser-342, Ser-346, and Ser-352 each carry the phosphoserine modification. Position 353 is a phosphothreonine (Thr-353). A Phosphoserine modification is found at Ser-481.

This sequence belongs to the SUFU family. As to quaternary structure, may form homodimers. Part of a DNA-bound corepressor complex containing SAP18, GLI1 and SIN3. Part of a complex containing CTNNB1. Binds BTRC, GLI2, GLI3, SAP18 and STK36. Binds both free and DNA-bound GLI1. Interacts with KIF7. Interacts with GLI3FL and this interaction regulates the formation of either repressor or activator forms of GLI3. Its association with GLI3FL is regulated by Hh signaling and dissociation of the SUFU-GLI3 interaction requires the presence of the ciliary motor KIF3A. Interacts with ULK3; inactivating the protein kinase activity of ULK3. Interacts with RAB23. Post-translationally, polyubiquitinated at Lys-257 by the SCF(FBXL17) complex, leading to its subsequent degradation and allowing the release of GLI1 for proper hedgehog/smoothened signal transduction. Ubiquitination is impaired by phosphorylation at Ser-342, Ser-346, Ser-352 and Thr-353. In terms of processing, phosphorylation at Ser-342, Ser-346, Ser-352 and Thr-353 prevents ubiquitination by the SCF(FBXL17) complex. As to expression, ubiquitous in adult tissues. Detected in osteoblasts of the perichondrium in the developing limb of 12-week old embryos. Isoform 1 is detected in fetal brain, lung, kidney and testis. Isoform 2 is detected in fetal testis, and at much lower levels in fetal brain, lung and kidney.

The protein resides in the cytoplasm. The protein localises to the nucleus. Negative regulator in the hedgehog/smoothened signaling pathway. Down-regulates GLI1-mediated transactivation of target genes. Down-regulates GLI2-mediated transactivation of target genes. Part of a corepressor complex that acts on DNA-bound GLI1. May also act by linking GLI1 to BTRC and thereby targeting GLI1 to degradation by the proteasome. Sequesters GLI1, GLI2 and GLI3 in the cytoplasm, this effect is overcome by binding of STK36 to both SUFU and a GLI protein. Negative regulator of beta-catenin signaling. Regulates the formation of either the repressor form (GLI3R) or the activator form (GLI3A) of the full-length form of GLI3 (GLI3FL). GLI3FL is complexed with SUFU in the cytoplasm and is maintained in a neutral state. Without the Hh signal, the SUFU-GLI3 complex is recruited to cilia, leading to the efficient processing of GLI3FL into GLI3R. When Hh signaling is initiated, SUFU dissociates from GLI3FL and the latter translocates to the nucleus, where it is phosphorylated, destabilized, and converted to a transcriptional activator (GLI3A). Required for normal embryonic development. Required for the proper formation of hair follicles and the control of epidermal differentiation. The sequence is that of Suppressor of fused homolog from Homo sapiens (Human).